Consider the following 232-residue polypeptide: U-scoloptoxin(11)-Sa3a (232 aa).

Positions 1-21 (MFQFCLLILLLAPGRFFSALG) are cleaved as a signal peptide.

This sequence belongs to the scoloptoxin-11 family. Contains 8 disulfide bonds. Expressed by the venom gland.

It localises to the secreted. The chain is U-scoloptoxin(11)-Sa3a from Scolopendra alternans (Florida Keys giant centipede).